The primary structure comprises 212 residues: RING-H2 finger protein ATL68 (212 aa).

Residues 24 to 44 (LGLGYSIAIALGFLVLISTII) form a helical membrane-spanning segment. The RING-type; atypical zinc finger occupies 136–178 (CSICLCEYMEEEMLRMMPECKHYFHVYCLDAWLKLNGSCPVCR). The interval 182-212 (LPTPQSTPQSTPLSEVVPLSQYAADRRRSRR) is disordered. Low complexity predominate over residues 185-195 (PQSTPQSTPLS).

The protein belongs to the RING-type zinc finger family. ATL subfamily.

It localises to the membrane. The enzyme catalyses S-ubiquitinyl-[E2 ubiquitin-conjugating enzyme]-L-cysteine + [acceptor protein]-L-lysine = [E2 ubiquitin-conjugating enzyme]-L-cysteine + N(6)-ubiquitinyl-[acceptor protein]-L-lysine.. It functions in the pathway protein modification; protein ubiquitination. This Arabidopsis thaliana (Mouse-ear cress) protein is RING-H2 finger protein ATL68 (ATL68).